A 298-amino-acid polypeptide reads, in one-letter code: Lipoyl synthase (298 aa).

[4Fe-4S] cluster is bound by residues Cys-40, Cys-45, Cys-51, Cys-67, Cys-71, Cys-74, and Ser-280. A Radical SAM core domain is found at 53 to 269 (AVRKTATFMI…KEIALSKGFS (217 aa)).

The protein belongs to the radical SAM superfamily. Lipoyl synthase family. It depends on [4Fe-4S] cluster as a cofactor.

It localises to the cytoplasm. It carries out the reaction [[Fe-S] cluster scaffold protein carrying a second [4Fe-4S](2+) cluster] + N(6)-octanoyl-L-lysyl-[protein] + 2 oxidized [2Fe-2S]-[ferredoxin] + 2 S-adenosyl-L-methionine + 4 H(+) = [[Fe-S] cluster scaffold protein] + N(6)-[(R)-dihydrolipoyl]-L-lysyl-[protein] + 4 Fe(3+) + 2 hydrogen sulfide + 2 5'-deoxyadenosine + 2 L-methionine + 2 reduced [2Fe-2S]-[ferredoxin]. It participates in protein modification; protein lipoylation via endogenous pathway; protein N(6)-(lipoyl)lysine from octanoyl-[acyl-carrier-protein]. Its function is as follows. Catalyzes the radical-mediated insertion of two sulfur atoms into the C-6 and C-8 positions of the octanoyl moiety bound to the lipoyl domains of lipoate-dependent enzymes, thereby converting the octanoylated domains into lipoylated derivatives. The sequence is that of Lipoyl synthase from Bacillus cereus (strain G9842).